A 193-amino-acid polypeptide reads, in one-letter code: Cytochrome c biogenesis ATP-binding export protein CcmA (193 aa).

The 183-residue stretch at 9-191 (LSASGLAILR…AAGFPVTAEV (183 aa)) folds into the ABC transporter domain. 41 to 48 (GANGAGKT) serves as a coordination point for ATP.

It belongs to the ABC transporter superfamily. CcmA exporter (TC 3.A.1.107) family. As to quaternary structure, the complex is composed of two ATP-binding proteins (CcmA) and two transmembrane proteins (CcmB).

It localises to the cell inner membrane. The catalysed reaction is heme b(in) + ATP + H2O = heme b(out) + ADP + phosphate + H(+). Functionally, part of the ABC transporter complex CcmAB involved in the biogenesis of c-type cytochromes; once thought to export heme, this seems not to be the case, but its exact role is uncertain. Responsible for energy coupling to the transport system. In Hyphomonas neptunium (strain ATCC 15444), this protein is Cytochrome c biogenesis ATP-binding export protein CcmA.